We begin with the raw amino-acid sequence, 402 residues long: DNA replication and repair protein RecF (402 aa).

30–37 (GYNGIGKT) serves as a coordination point for ATP.

This sequence belongs to the RecF family.

The protein resides in the cytoplasm. Functionally, the RecF protein is involved in DNA metabolism; it is required for DNA replication and normal SOS inducibility. RecF binds preferentially to single-stranded, linear DNA. It also seems to bind ATP. The protein is DNA replication and repair protein RecF of Pseudarthrobacter chlorophenolicus (strain ATCC 700700 / DSM 12829 / CIP 107037 / JCM 12360 / KCTC 9906 / NCIMB 13794 / A6) (Arthrobacter chlorophenolicus).